A 227-amino-acid chain; its full sequence is Cytochrome c oxidase subunit 2 (227 aa).

Topologically, residues 1-14 are mitochondrial intermembrane; sequence MAYPFQLGLQDATS. A helical membrane pass occupies residues 15 to 45; the sequence is PIMEELLHFHDHTLMIVFLISSLVLYIISLM. At 46–59 the chain is on the mitochondrial matrix side; the sequence is LTTKLTHTSTMDAQ. The chain crosses the membrane as a helical span at residues 60-87; it reads EVETVWTILPAIILILIALLSLRILYMM. Residues 88–227 lie on the Mitochondrial intermembrane side of the membrane; that stretch reads DEINNPFLTM…YFETWSALMV (140 aa). Cu cation-binding residues include His161, Cys196, Glu198, Cys200, His204, and Met207. Glu198 provides a ligand contact to Mg(2+). Phosphotyrosine is present on Tyr218.

Belongs to the cytochrome c oxidase subunit 2 family. As to quaternary structure, component of the cytochrome c oxidase (complex IV, CIV), a multisubunit enzyme composed of 14 subunits. The complex is composed of a catalytic core of 3 subunits MT-CO1, MT-CO2 and MT-CO3, encoded in the mitochondrial DNA, and 11 supernumerary subunits COX4I, COX5A, COX5B, COX6A, COX6B, COX6C, COX7A, COX7B, COX7C, COX8 and NDUFA4, which are encoded in the nuclear genome. The complex exists as a monomer or a dimer and forms supercomplexes (SCs) in the inner mitochondrial membrane with NADH-ubiquinone oxidoreductase (complex I, CI) and ubiquinol-cytochrome c oxidoreductase (cytochrome b-c1 complex, complex III, CIII), resulting in different assemblies (supercomplex SCI(1)III(2)IV(1) and megacomplex MCI(2)III(2)IV(2)). Found in a complex with TMEM177, COA6, COX18, COX20, SCO1 and SCO2. Interacts with TMEM177 in a COX20-dependent manner. Interacts with COX20. Interacts with COX16. Cu cation is required as a cofactor.

It is found in the mitochondrion inner membrane. The enzyme catalyses 4 Fe(II)-[cytochrome c] + O2 + 8 H(+)(in) = 4 Fe(III)-[cytochrome c] + 2 H2O + 4 H(+)(out). Its function is as follows. Component of the cytochrome c oxidase, the last enzyme in the mitochondrial electron transport chain which drives oxidative phosphorylation. The respiratory chain contains 3 multisubunit complexes succinate dehydrogenase (complex II, CII), ubiquinol-cytochrome c oxidoreductase (cytochrome b-c1 complex, complex III, CIII) and cytochrome c oxidase (complex IV, CIV), that cooperate to transfer electrons derived from NADH and succinate to molecular oxygen, creating an electrochemical gradient over the inner membrane that drives transmembrane transport and the ATP synthase. Cytochrome c oxidase is the component of the respiratory chain that catalyzes the reduction of oxygen to water. Electrons originating from reduced cytochrome c in the intermembrane space (IMS) are transferred via the dinuclear copper A center (CU(A)) of subunit 2 and heme A of subunit 1 to the active site in subunit 1, a binuclear center (BNC) formed by heme A3 and copper B (CU(B)). The BNC reduces molecular oxygen to 2 water molecules using 4 electrons from cytochrome c in the IMS and 4 protons from the mitochondrial matrix. This is Cytochrome c oxidase subunit 2 (MT-CO2) from Nyctereutes procyonoides (Raccoon dog).